The chain runs to 333 residues: Biotin synthase (333 aa).

Residues 47 to 276 (YYGKKVKLNM…TKEIRISGGR (230 aa)) enclose the Radical SAM core domain. Residues cysteine 65, cysteine 69, and cysteine 72 each coordinate [4Fe-4S] cluster. Positions 109, 141, 201, and 271 each coordinate [2Fe-2S] cluster.

The protein belongs to the radical SAM superfamily. Biotin synthase family. In terms of assembly, homodimer. Requires [4Fe-4S] cluster as cofactor. [2Fe-2S] cluster is required as a cofactor.

It catalyses the reaction (4R,5S)-dethiobiotin + (sulfur carrier)-SH + 2 reduced [2Fe-2S]-[ferredoxin] + 2 S-adenosyl-L-methionine = (sulfur carrier)-H + biotin + 2 5'-deoxyadenosine + 2 L-methionine + 2 oxidized [2Fe-2S]-[ferredoxin]. Its pathway is cofactor biosynthesis; biotin biosynthesis; biotin from 7,8-diaminononanoate: step 2/2. In terms of biological role, catalyzes the conversion of dethiobiotin (DTB) to biotin by the insertion of a sulfur atom into dethiobiotin via a radical-based mechanism. This is Biotin synthase from Bacillus licheniformis (strain ATCC 14580 / DSM 13 / JCM 2505 / CCUG 7422 / NBRC 12200 / NCIMB 9375 / NCTC 10341 / NRRL NRS-1264 / Gibson 46).